Here is an 84-residue protein sequence, read N- to C-terminus: ATP synthase subunit c (84 aa).

2 helical membrane-spanning segments follow: residues 13–33 (IAVG…WGLI) and 56–76 (FIFA…GFWF).

This sequence belongs to the ATPase C chain family. F-type ATPases have 2 components, F(1) - the catalytic core - and F(0) - the membrane proton channel. F(1) has five subunits: alpha(3), beta(3), gamma(1), delta(1), epsilon(1). F(0) has three main subunits: a(1), b(2) and c(10-14). The alpha and beta chains form an alternating ring which encloses part of the gamma chain. F(1) is attached to F(0) by a central stalk formed by the gamma and epsilon chains, while a peripheral stalk is formed by the delta and b chains.

The protein resides in the cell inner membrane. F(1)F(0) ATP synthase produces ATP from ADP in the presence of a proton or sodium gradient. F-type ATPases consist of two structural domains, F(1) containing the extramembraneous catalytic core and F(0) containing the membrane proton channel, linked together by a central stalk and a peripheral stalk. During catalysis, ATP synthesis in the catalytic domain of F(1) is coupled via a rotary mechanism of the central stalk subunits to proton translocation. Its function is as follows. Key component of the F(0) channel; it plays a direct role in translocation across the membrane. A homomeric c-ring of between 10-14 subunits forms the central stalk rotor element with the F(1) delta and epsilon subunits. The polypeptide is ATP synthase subunit c (Acidithiobacillus ferrooxidans (strain ATCC 23270 / DSM 14882 / CIP 104768 / NCIMB 8455) (Ferrobacillus ferrooxidans (strain ATCC 23270))).